We begin with the raw amino-acid sequence, 212 residues long: Ras-related protein Rab-17 (212 aa).

At Ser29 the chain carries Phosphoserine. GTP is bound by residues Gly31, Lys32, Ser33, and Thr50. 3 residues coordinate Mg(2+): Ser33, Thr50, and Asp73. The Switch 1 motif lies at 43–54 (DFKSILPTVGCA). A Switch 2 motif is present at residues 75–91 (AGQEKYHSVCHLYFRGA). GTP-binding residues include Gly76, Asn132, Lys133, Asp135, and Ala163. Residues Cys209 and Cys210 are each lipidated (S-geranylgeranyl cysteine).

The protein belongs to the small GTPase superfamily. Rab family. The cofactor is Mg(2+). Expressed in melanocytes (at protein level).

Its subcellular location is the recycling endosome membrane. It localises to the melanosome. It is found in the cell projection. The protein resides in the dendrite. The enzyme catalyses GTP + H2O = GDP + phosphate + H(+). Its activity is regulated as follows. Regulated by guanine nucleotide exchange factors (GEFs) which promote the exchange of bound GDP for free GTP. Regulated by GTPase activating proteins (GAPs) which increase the GTP hydrolysis activity. Inhibited by GDP dissociation inhibitors (GDIs). Its function is as follows. The small GTPases Rab are key regulators of intracellular membrane trafficking, from the formation of transport vesicles to their fusion with membranes. Rabs cycle between an inactive GDP-bound form and an active GTP-bound form that is able to recruit to membranes different set of downstream effectors directly responsible for vesicle formation, movement, tethering and fusion. RAB17 is involved in transcytosis, the directed movement of endocytosed material through the cell and its exocytosis from the plasma membrane at the opposite side. Mainly observed in epithelial cells, transcytosis mediates for instance, the transcellular transport of immunoglobulins from the basolateral surface to the apical surface. Most probably controls membrane trafficking through apical recycling endosomes in a post-endocytic step of transcytosis. Required for melanosome transport and release from melanocytes, it also regulates dendrite and dendritic spine development. May also play a role in cell migration. The protein is Ras-related protein Rab-17 of Homo sapiens (Human).